A 526-amino-acid chain; its full sequence is Cell adhesion molecule CEACAM1 (526 aa).

The signal sequence occupies residues 1–34 (MGHLSAPLHRVRVPWQGLLLTASLLTFWNPPTTA). Q35 is modified (pyrrolidone carboxylic acid). The Ig-like V-type domain occupies 35–142 (QLTTESMPFN…EATGQFHVYP (108 aa)). Residues 35–428 (QLTTESMPFN…LPQENGLSPG (394 aa)) lie on the Extracellular side of the membrane. Residues 39 to 142 (ESMPFNVAEG…EATGQFHVYP (104 aa)) form a required for homophilic binding region. N-linked (GlcNAc...) asparagine glycans are attached at residues N104, N111, N115, N152, N182, N197, N208, N224, N232, N254, N274, N288, N292, N302, N309, N345, N351, N363, N378, and N405. 3 Ig-like C2-type domains span residues 145–232 (PKPS…VTLN), 237–317 (PDTP…KTII), and 323–413 (PVVA…IMLN). A disulfide bridge connects residues C167 and C215. Cysteines 259 and 299 form a disulfide. Residues C348 and C396 are joined by a disulfide bond. A helical transmembrane segment spans residues 429–452 (AIAGIVIGVVALVALIAVALACFL). An interaction with calmodulin region spans residues 450 to 462 (CFLHFGKTGRASD). An interaction with FLNA region spans residues 452–526 (LHFGKTGRAS…EIIYSEVKKQ (75 aa)). At 453–526 (HFGKTGRASD…EIIYSEVKKQ (74 aa)) the chain is on the cytoplasmic side. Residues 461 to 482 (SDQRDLTEHKPSVSNHTQDHSN) are compositionally biased toward basic and acidic residues. A disordered region spans residues 461–513 (SDQRDLTEHKPSVSNHTQDHSNDPPNKMNEVTYSTLNFEAQQPTQPTSASPSL). Polar residues predominate over residues 489 to 513 (NEVTYSTLNFEAQQPTQPTSASPSL). Residues 489 to 526 (NEVTYSTLNFEAQQPTQPTSASPSLTATEIIYSEVKKQ) form a required for interaction with PTPN11 and PTPN6 and for control of phosphorylation level region. Y493 is modified (phosphotyrosine; by SRC, LCK, INSR and EGFR). Residue S508 is modified to Phosphoserine. The residue at position 520 (Y520) is a Phosphotyrosine; by INSR, SRC and LCK. Positions 520 to 523 (YSEV) are essential for interaction with PTPN11 and PTPN6.

This sequence belongs to the immunoglobulin superfamily. CEA family. Monomer. Oligomer. Heterodimer. Homodimer. Cis-dimer/oligomer (via Ig-like C2-type and/or via cytoplasmic domains); induced by trans-homophilic cell adhesion through an allosteric mechanism transmitted by the Ig-like V-type domain, and is regulated by intracellular calcium and calmodulin. Interacts (via cytoplasmic domain) with calmodulin in a calcium dependent manner; reduces homophilic cell adhesion through dissociation of dimer. Isoform 1 interacts (via cytoplasmic domain) with PTPN11 (preferentially) and PTPN6; cis-homodimer form is preferred; this interaction is decreased by formation of Isoform 1 /Isoform 8 cis-heterodimers and is dependent on the monomer/dimer equilibrium; this interaction is phosphorylation-dependent. Isoform 1 interacts with LYN. Isoform 1 interacts (via cytoplasmic domain) with SRC (via SH2 domain); this interaction is regulated by trans-homophilic cell adhesion. Isoform 1 interacts (via cytoplasmic domain) with LCK; mediates phosphorylation at Tyr-493 and Tyr-520 resulting in PTPN6 association. Isoform 1 interacts with PTPN6; this interaction is phosphorylation-dependent and causes a profound decrease in TCR stimulation-induced CD247 and ZAP70 phosphorylation. Isoform 1 interacts with TCR/CD3 complex through TCR beta chain and CD3E; colocalizes at the cell surface and upon stimulation of the TCR/CD3 complex recruits PTPN6 in the TCR/CD3 complex, resulting in dephosphorylation of CD247 and ZAP70. Isoform 1 interacts (via cytoplasmic domain) with SHC1 (via SH2 domain); SHC1 mediates interaction with INSR or EGFR in a Ser-508 phosphorylation-dependent manner. Isoform 1 interacts with EGFR; the interaction is indirect. Isoform 1 interacts with CSF3R; down-regulates the CSF3R-STAT3 pathway through recruitment of PTPN6 that dephosphorylates CSF3R. Isoform 1 (phosphorylated form) interacts with TLR4 and SYK; recruits PTPN6 that dephosphorylates SYK, reducing the production of reactive oxygen species (ROS) and lysosome disruption, leading to a reduction of the inflammasome activity. Isoform 1 interacts with FLNA; inhibits cell migration and cell scattering by interfering with the interaction of FLNA with RALA. Isoform 1 interacts (via cytoplasmic domain) with PXN; the interaction is phosphotyrosyl-dependent. Isoform 1 interacts with KLRK1; recruits PTPN6 that dephosphorylates VAV1. Isoform 1 interacts with CEACAM8. Isoform 1 interacts with FASN; this interaction is insulin and phosphorylation-dependent; reduces fatty-acid synthase activity. Interacts (via Ig-like V-type) with HAVCR2 (via Ig-like V-type); facilitates the maturation and cell surface expression of HAVCR2 thereby regulating T cell tolerance induction. Isoform 8 interacts (via the cytoplasmic domain) with ANXA2; this interaction is regulated by phosphorylation and appears in the AIIt complex. Interacts (via Lewis X moieties) with CD209 (via C-type lectin domain); this interaction is regulated by the glycosylation pattern of CEACAM1 on cell types and regulates contact between dendritic cells and neutrophils. Phosphorylated on serine and tyrosine. Isoform 1 is phosphorylated on tyrosine by Src family kinases like SRC and LCK and by receptor like CSF3R, EGFR and INSR upon stimulation. Phosphorylated at Ser-508; mediates activity. Phosphorylated at Tyr-493; regulates activity. Phosphorylated at Tyr-493 by EGFR and INSR upon stimulation; this phosphorylation is Ser-508-phosphorylation-dependent; mediates cellular internalization; increases interaction with downstream proteins like SHC1 and FASN. Phosphorylated at Tyr-493 and Tyr-520 by LCK; mediates PTPN6 association and is regulated by homophilic ligation of CEACAM1 in the absence of T cell activation. Phosphorylated at Tyr-520; mediates interaction with PTPN11. Post-translationally, phosphorylated on serine and threonine. In terms of tissue distribution, expressed in columnar epithelial cells of the colon (at protein level). The predominant forms expressed by T cells are those containing a long cytoplasmic domain. Expressed in granulocytes and lymphocytes. Leukocytes only express isoforms 6 and isoform 1.

Its subcellular location is the cell membrane. The protein localises to the lateral cell membrane. It localises to the apical cell membrane. It is found in the basal cell membrane. The protein resides in the cell junction. Its subcellular location is the adherens junction. The protein localises to the secreted. It localises to the cytoplasmic vesicle. It is found in the secretory vesicle membrane. The protein resides in the cell projection. Its subcellular location is the microvillus membrane. Cell adhesion protein that mediates homophilic cell adhesion in a calcium-independent manner. Plays a role as coinhibitory receptor in immune response, insulin action and also functions as an activator during angiogenesis. Its coinhibitory receptor function is phosphorylation- and PTPN6 -dependent, which in turn, suppress signal transduction of associated receptors by dephosphorylation of their downstream effectors. Plays a role in immune response, of T cells, natural killer (NK) and neutrophils. Upon TCR/CD3 complex stimulation, inhibits TCR-mediated cytotoxicity by blocking granule exocytosis by mediating homophilic binding to adjacent cells, allowing interaction with and phosphorylation by LCK and interaction with the TCR/CD3 complex which recruits PTPN6 resulting in dephosphorylation of CD247 and ZAP70. Also inhibits T cell proliferation and cytokine production through inhibition of JNK cascade and plays a crucial role in regulating autoimmunity and anti-tumor immunity by inhibiting T cell through its interaction with HAVCR2. Upon natural killer (NK) cells activation, inhibit KLRK1-mediated cytolysis of CEACAM1-bearing tumor cells by trans-homophilic interactions with CEACAM1 on the target cell and lead to cis-interaction between CEACAM1 and KLRK1, allowing PTPN6 recruitment and then VAV1 dephosphorylation. Upon neutrophils activation negatively regulates IL1B production by recruiting PTPN6 to a SYK-TLR4-CEACAM1 complex, that dephosphorylates SYK, reducing the production of reactive oxygen species (ROS) and lysosome disruption, which in turn, reduces the activity of the inflammasome. Down-regulates neutrophil production by acting as a coinhibitory receptor for CSF3R by down-regulating the CSF3R-STAT3 pathway through recruitment of PTPN6 that dephosphorylates CSF3R. Also regulates insulin action by promoting INS clearance and regulating lipogenesis in liver through regulating insulin signaling. Upon INS stimulation, undergoes phosphorylation by INSR leading to INS clearance by increasing receptor-mediated insulin endocytosis. This inernalization promotes interaction with FASN leading to receptor-mediated insulin degradation and to reduction of FASN activity leading to negative regulation of fatty acid synthesis. INSR-mediated phosphorylation also provokes a down-regulation of cell proliferation through SHC1 interaction resulting in decrease coupling of SHC1 to the MAPK3/ERK1-MAPK1/ERK2 and phosphatidylinositol 3-kinase pathways. Functions as activator in angiogenesis by promoting blood vessel remodeling through endothelial cell differentiation and migration and in arteriogenesis by increasing the number of collateral arteries and collateral vessel calibers after ischemia. Also regulates vascular permeability through the VEGFR2 signaling pathway resulting in control of nitric oxide production. Down-regulates cell growth in response to EGF through its interaction with SHC1 that mediates interaction with EGFR resulting in decrease coupling of SHC1 to the MAPK3/ERK1-MAPK1/ERK2 pathway. Negatively regulates platelet aggregation by decreasing platelet adhesion on type I collagen through the GPVI-FcRgamma complex. Inhibits cell migration and cell scattering through interaction with FLNA; interferes with the interaction of FLNA with RALA. Mediates bile acid transport activity in a phosphorylation dependent manner. Negatively regulates osteoclastogenesis. Its function is as follows. Cell adhesion protein that mediates homophilic cell adhesion in a calcium-independent manner. Promotes populations of T cells regulating IgA production and secretion associated with control of the commensal microbiota and resistance to enteropathogens. In Homo sapiens (Human), this protein is Cell adhesion molecule CEACAM1.